The chain runs to 448 residues: Methionine aminopeptidase 2 (448 aa).

The disordered stretch occupies residues Met1 to Asp47. A compositionally biased stretch (basic residues) spans Lys24–Ser34. His198 is a binding site for substrate. Asp218, Asp229, and His298 together coordinate a divalent metal cation. A substrate-binding site is contributed by His306. Glu331 and Glu429 together coordinate a divalent metal cation.

This sequence belongs to the peptidase M24A family. Methionine aminopeptidase eukaryotic type 2 subfamily. It depends on Co(2+) as a cofactor. The cofactor is Zn(2+). Requires Mn(2+) as cofactor. Fe(2+) is required as a cofactor.

The protein resides in the cytoplasm. The catalysed reaction is Release of N-terminal amino acids, preferentially methionine, from peptides and arylamides.. In terms of biological role, cotranslationally removes the N-terminal methionine from nascent proteins. The N-terminal methionine is often cleaved when the second residue in the primary sequence is small and uncharged (Met-Ala-, Cys, Gly, Pro, Ser, Thr, or Val). This chain is Methionine aminopeptidase 2, found in Komagataella phaffii (strain GS115 / ATCC 20864) (Yeast).